Here is a 144-residue protein sequence, read N- to C-terminus: Large ribosomal subunit protein uL16 (144 aa).

This sequence belongs to the universal ribosomal protein uL16 family. In terms of assembly, part of the 50S ribosomal subunit.

Functionally, binds 23S rRNA and is also seen to make contacts with the A and possibly P site tRNAs. The sequence is that of Large ribosomal subunit protein uL16 from Lactiplantibacillus plantarum (strain ATCC BAA-793 / NCIMB 8826 / WCFS1) (Lactobacillus plantarum).